We begin with the raw amino-acid sequence, 34 residues long: Corticostatin-6 (34 aa).

3 disulfide bridges follow: C3–C31, C5–C20, and C10–C30.

This sequence belongs to the alpha-defensin family. As to expression, lung, spleen, small intestine, pituitary gland, adrenal medulla and plasma.

It is found in the secreted. Functionally, microbicidal activity and inhibits corticotropin (ACTH) stimulated corticosterone production. This chain is Corticostatin-6, found in Oryctolagus cuniculus (Rabbit).